The sequence spans 681 residues: Phenylalanine--tRNA ligase beta subunit (681 aa).

Positions 288–363 (PARETVLLRP…RIHGYDQIPE (76 aa)) constitute a B5 domain. The Mg(2+) site is built by D341, D347, E350, and E351. Residues 586 to 681 (SSFPSIQRDL…EKQLEAVLLR (96 aa)) enclose the FDX-ACB domain.

Belongs to the phenylalanyl-tRNA synthetase beta subunit family. Type 1 subfamily. In terms of assembly, tetramer of two alpha and two beta subunits. It depends on Mg(2+) as a cofactor.

Its subcellular location is the cytoplasm. It carries out the reaction tRNA(Phe) + L-phenylalanine + ATP = L-phenylalanyl-tRNA(Phe) + AMP + diphosphate + H(+). The protein is Phenylalanine--tRNA ligase beta subunit of Rhodopirellula baltica (strain DSM 10527 / NCIMB 13988 / SH1).